The primary structure comprises 910 residues: Potassium/sodium hyperpolarization-activated cyclic nucleotide-gated channel 1 (910 aa).

Positions 1-75 are disordered; that stretch reads MEGGGKPNSA…PAGSFEDAEG (75 aa). At 1 to 131 the chain is on the cytoplasmic side; that stretch reads MEGGGKPNSA…WIIHPYSDFR (131 aa). A helical transmembrane segment spans residues 132–153; that stretch reads FYWDLIMLIMMVGNLVIIPVGI. Residues 154-162 lie on the Extracellular side of the membrane; it reads TFFTEQTTT. The helical transmembrane segment at 163–183 threads the bilayer; the sequence is PWIIFNVASDTVFLLDLIMNF. Residues 184–204 lie on the Cytoplasmic side of the membrane; sequence RTGTVNEDSSEIILDPKVIKM. A helical membrane pass occupies residues 205 to 225; it reads NYLKSWFVVDFISSIPVDYIF. At 226–249 the chain is on the extracellular side; the sequence is LIVEKGMDSEVYKTARALRIVRFT. The chain crosses the membrane as a helical; Voltage-sensor span at residues 250–270; the sequence is KILSLLRLLRLSRLIRYIHQW. Topologically, residues 271-284 are cytoplasmic; sequence EEIFHMTYDLASAV. A helical transmembrane segment spans residues 285–307; the sequence is VRIFNLIGMMLLLCHWDGCLQFL. Residues 308-333 lie on the Extracellular side of the membrane; the sequence is VPLLQDFPPDCWVSLNEMVNDSWGKQ. Residue asparagine 327 is glycosylated (N-linked (GlcNAc...) asparagine). The pore-forming intramembrane region spans 334 to 355; it reads YSYALFKAMSHMLCIGYGAQAP. Residues 347 to 351 carry the Selectivity filter motif; the sequence is CIGYG. The Extracellular segment spans residues 356-360; it reads VSMSD. A helical transmembrane segment spans residues 361–381; that stretch reads LWITMLSMIVGATCYAMFVGH. The Cytoplasmic portion of the chain corresponds to 382-910; the sequence is ATALIQSLDS…AEKPRFASNL (529 aa). Residues glycine 528, glutamate 529, cysteine 531, arginine 538, threonine 539, arginine 579, and arginine 582 each contribute to the 3',5'-cyclic AMP site. Disordered regions lie at residues 634–681, 771–791, and 865–910; these read TALN…QPSA, QQQQ…VHKS, and QMSS…ASNL. Residues 639–680 show a composition bias toward low complexity; that stretch reads TSSTTTPTSRMRTQSPPVYTATSLSHSNLHSPSPSTQTPQPS. Residues 780–791 show a composition bias toward polar residues; that stretch reads GSSTPKNEVHKS. Residues 875–885 show a composition bias toward pro residues; that stretch reads RGVPPAPPPPA. Basic and acidic residues predominate over residues 900-910; that stretch reads DAEKPRFASNL.

This sequence belongs to the potassium channel HCN family. In terms of assembly, homotetramer. Heterotetramer with HCN2. The potassium channel is composed of a homo- or heterotetrameric complex of pore-forming subunits. Interacts with KCNE2. Interacts with the SH3 domain of CSK. Post-translationally, N-glycosylated. As to expression, predominantly expressed in brain. Highly expressed in apical dendrites of pyramidal neurons in the cortex, in the layer corresponding to the stratum lacunosum-moleculare in the hippocampus and in axons of basket cells in the cerebellum (at protein level). Expressed in a subset of elongated cells in taste buds.

The protein localises to the cell membrane. The enzyme catalyses Na(+)(in) = Na(+)(out). It carries out the reaction K(+)(in) = K(+)(out). Its activity is regulated as follows. Activated by cAMP. cAMP binding causes a conformation change that leads to the assembly of an active tetramer and channel opening. Compared to other family members, cAMP has less stimulatory effect on HCN1 because part of the molecules already contain bound cAMP and form homotetramers when cAMP levels are low, this inherent tetramerization in HCN1 results in a weaker response to increased cAMP. Its function is as follows. Hyperpolarization-activated ion channel that are permeable to sodium and potassium ions. Exhibits weak selectivity for potassium over sodium ions. Contributes to the native pacemaker currents in heart (If) and in neurons (Ih). Participates in cerebellar mechanisms of motor learning. May mediate responses to sour stimuli. This chain is Potassium/sodium hyperpolarization-activated cyclic nucleotide-gated channel 1 (Hcn1), found in Mus musculus (Mouse).